A 157-amino-acid polypeptide reads, in one-letter code: ATP synthase subunit b (157 aa).

A helical membrane pass occupies residues 1–21; that stretch reads MHFLDESFWLAISFIIFVYLI.

It belongs to the ATPase B chain family. F-type ATPases have 2 components, F(1) - the catalytic core - and F(0) - the membrane proton channel. F(1) has five subunits: alpha(3), beta(3), gamma(1), delta(1), epsilon(1). F(0) has three main subunits: a(1), b(2) and c(10-14). The alpha and beta chains form an alternating ring which encloses part of the gamma chain. F(1) is attached to F(0) by a central stalk formed by the gamma and epsilon chains, while a peripheral stalk is formed by the delta and b chains.

The protein localises to the cell inner membrane. F(1)F(0) ATP synthase produces ATP from ADP in the presence of a proton or sodium gradient. F-type ATPases consist of two structural domains, F(1) containing the extramembraneous catalytic core and F(0) containing the membrane proton channel, linked together by a central stalk and a peripheral stalk. During catalysis, ATP synthesis in the catalytic domain of F(1) is coupled via a rotary mechanism of the central stalk subunits to proton translocation. Functionally, component of the F(0) channel, it forms part of the peripheral stalk, linking F(1) to F(0). The chain is ATP synthase subunit b from Rickettsia bellii (strain RML369-C).